The following is a 313-amino-acid chain: Protein FixB (313 aa).

255–283 (LYLAVGISGQIQHMVGANASQTIFAINKD) provides a ligand contact to FAD.

This sequence belongs to the ETF alpha-subunit/FixB family. Heterodimer of FixA and FixB.

The protein operates within amine and polyamine metabolism; carnitine metabolism. Required for anaerobic carnitine reduction. May bring reductant to CaiA. The chain is Protein FixB from Shigella dysenteriae serotype 1 (strain Sd197).